Consider the following 452-residue polypeptide: Lamina-associated polypeptide 2, isoform beta (452 aa).

The tract at residues 1–409 (MPEFLEDPSV…KSEKTKKGRS (409 aa)) is nucleoplasmic. Positions 5–48 (LEDPSVLTKDKLKSELVANNVTLPAGEQRKDVYVQLYLQHLTAR) constitute an LEM-like domain. Disordered stretches follow at residues 48 to 113 (RNRP…DVTE) and 149 to 264 (REQG…VEPS). The segment at 49–107 (NRPPLAAGANSKGPPDFSSDEEREPTPVLGSGASVGRGRGAVGRKATKKTDKPRPEDKD) is linker. Phosphoserine is present on residues serine 66 and serine 67. Position 74 is a phosphothreonine (threonine 74). Residue serine 82 is modified to Phosphoserine. 2 positions are modified to omega-N-methylarginine: arginine 85 and arginine 87. Over residues 96 to 105 (KKTDKPRPED) the composition is skewed to basic and acidic residues. Positions 108–152 (DLDVTELSNEELLEQLVRYGVNPGPIVGTTRKLYEKKLLKLREQG) constitute an LEM domain. The tract at residues 137–242 (TRKLYEKKLL…TSGSSKGGPL (106 aa)) is NAKAP95-binding N. Polar residues predominate over residues 154 to 177 (ESRSSTPLPTVSSSAENTRQNGSN). 2 positions are modified to phosphoserine: serine 155 and serine 158. Phosphothreonine is present on threonine 159. Phosphoserine occurs at positions 165, 167, 176, 179, and 183. Positions 178 to 202 (DSDRYSDNDEDSKIELKLEKREPLK) are enriched in basic and acidic residues. Lysine 206 bears the N6-acetyllysine mark. The binds lamins B stretch occupies residues 298–370 (TGNFKHASSI…SCRRPIKGAA (73 aa)). The NAKAP95-binding C stretch occupies residues 299–373 (GNFKHASSIL…RPIKGAAGRP (75 aa)). Serine 305, serine 306, and serine 361 each carry phosphoserine. Lysine 388 bears the N6-acetyllysine mark. A helical; Signal-anchor for type II membrane protein membrane pass occupies residues 410-430 (VPMWIKMLLFALVAGFLFLVY). Over 431 to 452 (QAMETNQGNPFTNFLQDTKISN) the chain is Lumenal.

Belongs to the LEM family. In terms of assembly, interacts with LMNB1, LMNB2, BANF1, AKAP8L, GMCL and chromosomes. Post-translationally, mitosis-specific phosphorylation specifically abolishes its binding to lamin B and chromosomes.

It is found in the nucleus inner membrane. The protein resides in the chromosome. In terms of biological role, binds directly to lamin B1 and chromosomes in a mitotic phosphorylation-regulated manner. May play an important role in nuclear envelope reassembly at the end of mitosis and/or anchoring of the nuclear lamina and interphase chromosomes to the nuclear envelope. This is Lamina-associated polypeptide 2, isoform beta (Tmpo) from Rattus norvegicus (Rat).